A 255-amino-acid polypeptide reads, in one-letter code: MLVMAGLGLYDELDVTLKTVEFAKKVDKIYAEFYTAILTGTTIEKIEKTLQKEITVLNREKVEYETNKLIEEAKEKDIMFLTAGDPMVATTHVDIAVEARKKGIEVIILNAPSIYSAIGITGLQLYKFGKTTSIVFPEPNYFPETPYDVIKDNLSLGYHTLCLLDIQTDKQKFMTANEGLSVLLEIEEKRKEKIIDENTKVLVVARAGSIKPGLFYGKIKDLIKHDFGTPLHCVIILGKLHFMETDALKYLFENI.

Residues Leu-9, Asp-85, Val-88, 113-114 (SI), Leu-164, Ala-207, and His-232 contribute to the S-adenosyl-L-methionine site.

It belongs to the diphthine synthase family. In terms of assembly, homodimer.

It carries out the reaction 2-[(3S)-amino-3-carboxypropyl]-L-histidyl-[translation elongation factor 2] + 3 S-adenosyl-L-methionine = diphthine-[translation elongation factor 2] + 3 S-adenosyl-L-homocysteine + 3 H(+). Its pathway is protein modification; peptidyl-diphthamide biosynthesis. In terms of biological role, S-adenosyl-L-methionine-dependent methyltransferase that catalyzes the trimethylation of the amino group of the modified target histidine residue in translation elongation factor 2 (EF-2), to form an intermediate called diphthine. The three successive methylation reactions represent the second step of diphthamide biosynthesis. This is Diphthine synthase from Methanococcus vannielii (strain ATCC 35089 / DSM 1224 / JCM 13029 / OCM 148 / SB).